A 191-amino-acid chain; its full sequence is 2-amino-4-hydroxy-6-hydroxymethyldihydropteridine pyrophosphokinase (191 aa).

It belongs to the HPPK family.

It carries out the reaction 6-hydroxymethyl-7,8-dihydropterin + ATP = (7,8-dihydropterin-6-yl)methyl diphosphate + AMP + H(+). It participates in cofactor biosynthesis; tetrahydrofolate biosynthesis; 2-amino-4-hydroxy-6-hydroxymethyl-7,8-dihydropteridine diphosphate from 7,8-dihydroneopterin triphosphate: step 4/4. Functionally, catalyzes the transfer of pyrophosphate from adenosine triphosphate (ATP) to 6-hydroxymethyl-7,8-dihydropterin, an enzymatic step in folate biosynthesis pathway. The protein is 2-amino-4-hydroxy-6-hydroxymethyldihydropteridine pyrophosphokinase (folK) of Mycobacterium leprae (strain TN).